A 319-amino-acid polypeptide reads, in one-letter code: GATA transcription factor 18 (319 aa).

Over residues 1–15 the composition is skewed to low complexity; sequence MPDAAAAAAAAQDAD. A disordered region spans residues 1-74; it reads MPDAAAAAAA…AAPEPVSALL (74 aa). Over residues 31–60 the composition is skewed to acidic residues; sequence DNDDDDGDDGTEEDEEEDDDEEGDEEELPP. One can recognise a Tify domain in the interval 74-109; that stretch reads LPGSPNQLTLLFQGEVYVFESVTPEKVQAVLLLLGR. The 43-residue stretch at 143–185 folds into the CCT domain; the sequence is RVASLIRFREKRKERNFDKKIRYAVRKEVALRMQRRKGQFAGR. A GATA-type zinc finger spans residues 215–242; that stretch reads CQNCGTSEKMTPAMRRGPAGPRTLCNAC. Residues 292 to 319 form a disordered region; the sequence is ITASHGEVMGDSTPANEAEIGAPKAQSQ.

This sequence belongs to the type IV zinc-finger family. Class C subfamily.

It is found in the nucleus. Its function is as follows. Transcriptional activator that specifically binds 5'-GATA-3' or 5'-GAT-3' motifs within gene promoters. The polypeptide is GATA transcription factor 18 (Oryza sativa subsp. japonica (Rice)).